Reading from the N-terminus, the 138-residue chain is Transcription antitermination protein NusB (138 aa).

The protein belongs to the NusB family.

In terms of biological role, involved in transcription antitermination. Required for transcription of ribosomal RNA (rRNA) genes. Binds specifically to the boxA antiterminator sequence of the ribosomal RNA (rrn) operons. In Helicobacter acinonychis (strain Sheeba), this protein is Transcription antitermination protein NusB.